We begin with the raw amino-acid sequence, 918 residues long: E3 ubiquitin-protein ligase CBL-B-A (918 aa).

The segment covering 1–18 has biased composition (low complexity); sequence MASGSGSSSSTSSSALSG. The disordered stretch occupies residues 1 to 27; it reads MASGSGSSSSTSSSALSGRLPGSRSAN. Residues 46–178 form a 4H region; the sequence is PPKQAAADRR…KAIFPSGQFQ (133 aa). Residues 46-354 enclose the Cbl-PTB domain; the sequence is PPKQAAADRR…GRSYNPDLTG (309 aa). An EF-hand-like region spans residues 179 to 251; that stretch reads GDNFRITKAD…FEFDIFTRLF (73 aa). Positions 232, 234, 236, 238, and 243 each coordinate Ca(2+). The tract at residues 252–354 is SH2-like; it reads QPWGSILRNW…GRSYNPDLTG (103 aa). Arg-297 is a 4-O-phospho-L-tyrosine binding site. Residues 355-383 form a linker region; it reads LCEPTPHDHIKVTQEQYELYCEMGSTFQL. The RING-type zinc finger occupies 384 to 423; the sequence is CKICAENDKDVKIEPCGHLMCTSCLTSWQESDGQGCPFCR. 3 disordered regions span residues 481 to 582, 780 to 831, and 857 to 918; these read NERQ…RTCR, FPPA…PPAR, and HSDP…MRPT. Over residues 483–497 the composition is skewed to polar residues; it reads RQNSPVTSPGSSPLS. 2 stretches are compositionally biased toward pro residues: residues 554–576 and 821–830; these read LPAPPPLLREPPPPPERPPPIPP and PSQPPPPPPA. Polar residues predominate over residues 898 to 918; sequence KASNTKGELLLPNQNLIMRPT.

Interacts with several SH3 domain-containing proteins and with poly-ubiquitinated proteins.

The protein localises to the cytoplasm. The enzyme catalyses S-ubiquitinyl-[E2 ubiquitin-conjugating enzyme]-L-cysteine + [acceptor protein]-L-lysine = [E2 ubiquitin-conjugating enzyme]-L-cysteine + N(6)-ubiquitinyl-[acceptor protein]-L-lysine.. Its pathway is protein modification; protein ubiquitination. Its function is as follows. E3 ubiquitin-protein ligase which accepts ubiquitin from specific E2 ubiquitin-conjugating enzymes, and transfers it to substrates, generally promoting their degradation by the proteasome. The chain is E3 ubiquitin-protein ligase CBL-B-A (cblb-a) from Xenopus laevis (African clawed frog).